Consider the following 354-residue polypeptide: MKLQTTYPSNNYPIFVEHGAIDHISTYIDQFDQSFILIDEHVNQYFADKFNDILSYENVHKVIIPAGEKTKTFEQYQETLEYILSHHVTRNTAIIAVGGGATGDFAGFVAATLLRGVHFIQVPTTILAHDSSVGGKVGINSKQGKNLIGAFYRPTAVIYDLDFLKTLPFEQILSGYAEVYKHALLNGESATQDIEQHFKDREILQSLKGMDKYIAKGIETKLDIVVADEKEQGVRKFLNLGHTFGHAVEYYHKIPHGHAVMVGIIYQFIVANALFDSKHDINHYIQYLIQLGYPLDMITDLDFETLYQYMLSDKKNDKQGVQMVLIRQFGDIVVQHVDQLTLQHACEQLKTYFK.

NAD(+) contacts are provided by residues Asp-39, Tyr-45, 68 to 71, 100 to 104, 124 to 125, Lys-136, Lys-145, and 163 to 166; these read EKTK, GATGD, TT, and FLKT. Positions 178, 242, and 256 each coordinate Zn(2+).

The protein belongs to the sugar phosphate cyclases superfamily. Dehydroquinate synthase family. It depends on NAD(+) as a cofactor. Co(2+) is required as a cofactor. Zn(2+) serves as cofactor.

The protein resides in the cytoplasm. The catalysed reaction is 7-phospho-2-dehydro-3-deoxy-D-arabino-heptonate = 3-dehydroquinate + phosphate. The protein operates within metabolic intermediate biosynthesis; chorismate biosynthesis; chorismate from D-erythrose 4-phosphate and phosphoenolpyruvate: step 2/7. In terms of biological role, catalyzes the conversion of 3-deoxy-D-arabino-heptulosonate 7-phosphate (DAHP) to dehydroquinate (DHQ). The chain is 3-dehydroquinate synthase from Staphylococcus aureus (strain MRSA252).